We begin with the raw amino-acid sequence, 271 residues long: MASLLSLSSTPPSTANSNNYPSSTFKGNINNFRINPFNFAPLKLHLRNIVKKESTRLVVVASASSSNVSPSIGSGSETRFRLDNLGPQPGSRKKGKRKGRGHAAGQGGSCGFGMRGQKSRSGPGIMRGFEGGQMPLYRRIPKLRGIAGGMRAGLPKYVPINLRDIEVAGFKEGEEVSLESLKAKGIINPSGRERRLPLKILGEGELSTKLQIKARAFSGSAKEKLEAAGCSVTVLPGRKKYIKESVRKNLARADEYFAKKRAASASEAESA.

Disordered stretches follow at residues 1–21 (MASL…NNYP) and 66–120 (SNVS…QKSR). A chloroplast-targeting transit peptide spans 1–61 (MASLLSLSST…KESTRLVVVA (61 aa)). Over residues 66–76 (SNVSPSIGSGS) the composition is skewed to low complexity. Positions 91–101 (SRKKGKRKGRG) are enriched in basic residues. The span at 102–114 (HAAGQGGSCGFGM) shows a compositional bias: gly residues.

As to quaternary structure, component of the chloroplast large ribosomal subunit (LSU). Mature 70S chloroplast ribosomes of higher plants consist of a small (30S) and a large (50S) subunit. The 30S small subunit contains 1 molecule of ribosomal RNA (16S rRNA) and 24 different proteins. The 50S large subunit contains 3 rRNA molecules (23S, 5S and 4.5S rRNA) and 33 different proteins.

Its subcellular location is the plastid. The protein localises to the chloroplast. Its function is as follows. Component of the chloroplast ribosome (chloro-ribosome), a dedicated translation machinery responsible for the synthesis of chloroplast genome-encoded proteins, including proteins of the transcription and translation machinery and components of the photosynthetic apparatus. The protein is Large ribosomal subunit protein uL15c (RPL15) of Spinacia oleracea (Spinach).